Consider the following 121-residue polypeptide: MIKGIGLDIVEINRLAHVLSRQPRLPERILTLNEQDIFHALSEKRQLEFLAGRFAAKEAFAKAYGTGIGRHLSFHDIEIQKDEHGKPFIKSEKTKDDQVHVSITHTKEYAAAQVLIERLSS.

2 residues coordinate Mg(2+): D8 and E58.

The protein belongs to the P-Pant transferase superfamily. AcpS family. Mg(2+) serves as cofactor.

The protein localises to the cytoplasm. The enzyme catalyses apo-[ACP] + CoA = holo-[ACP] + adenosine 3',5'-bisphosphate + H(+). Transfers the 4'-phosphopantetheine moiety from coenzyme A to a Ser of acyl-carrier-protein. This is Holo-[acyl-carrier-protein] synthase from Bacillus pumilus (strain SAFR-032).